The sequence spans 207 residues: Serotonin N-acetyltransferase (207 aa).

Threonine 31 carries the post-translational modification Phosphothreonine; by PKA. Positions 35–196 constitute an N-acetyltransferase domain; it reads NEFRCLTPKD…TFTEMHCSLR (162 aa). Leucine 124 contacts substrate. Acetyl-CoA contacts are provided by residues 124–126 and 132–137; these read LAV and QQGKGS. Methionine 159 is a binding site for substrate. 168 to 170 provides a ligand contact to acetyl-CoA; that stretch reads YQR. Residue serine 205 is modified to Phosphoserine.

Belongs to the acetyltransferase family. AANAT subfamily. As to quaternary structure, monomer. Interacts with several 14-3-3 proteins, including YWHAB, YWHAE, YWHAG and YWHAZ, preferentially when phosphorylated at Thr-31. Phosphorylation on Ser-205 also allows binding to YWHAZ, but with lower affinity. The interaction with YWHAZ considerably increases affinity for arylalkylamines and acetyl-CoA and protects the enzyme from dephosphorylation and proteasomal degradation. It may also prevent thiol-dependent inactivation. In terms of processing, cAMP-dependent phosphorylation on both N-terminal Thr-31 and C-terminal Ser-205 regulates AANAT activity by promoting interaction with 14-3-3 proteins. In terms of tissue distribution, high levels in pineal gland and retina.

The protein resides in the cytoplasm. The catalysed reaction is a 2-arylethylamine + acetyl-CoA = an N-acetyl-2-arylethylamine + CoA + H(+). It functions in the pathway aromatic compound metabolism; melatonin biosynthesis; melatonin from serotonin: step 1/2. Controls the night/day rhythm of melatonin production in the pineal gland. Catalyzes the N-acetylation of serotonin into N-acetylserotonin, the penultimate step in the synthesis of melatonin. This Bos taurus (Bovine) protein is Serotonin N-acetyltransferase (AANAT).